We begin with the raw amino-acid sequence, 38 residues long: Large ribosomal subunit protein bL36 (38 aa).

The protein belongs to the bacterial ribosomal protein bL36 family.

The polypeptide is Large ribosomal subunit protein bL36 (Chlorobium limicola (strain DSM 245 / NBRC 103803 / 6330)).